Reading from the N-terminus, the 352-residue chain is Selenide, water dikinase (352 aa).

Cys23 is an active-site residue. Residues Lys26 and 54 to 56 each bind ATP; that span reads SRD. Asp57 lines the Mg(2+) pocket. Residues Asp74, Asp97, and 145 to 147 each bind ATP; that span reads GHS. Asp97 serves as a coordination point for Mg(2+). Asp233 is a binding site for Mg(2+).

This sequence belongs to the selenophosphate synthase 1 family. Class I subfamily. In terms of assembly, homodimer. Mg(2+) serves as cofactor.

The catalysed reaction is hydrogenselenide + ATP + H2O = selenophosphate + AMP + phosphate + 2 H(+). Synthesizes selenophosphate from selenide and ATP. This Shewanella sp. (strain MR-7) protein is Selenide, water dikinase.